A 24-amino-acid polypeptide reads, in one-letter code: Humanin (24 aa).

The sufficient to interact with BID and BIM and to suppress BID and BIM activity stretch occupies residues 1-12; it reads MAPRGFSCLLLL. The tract at residues 3–19 is sufficient for neuroprotective activity; the sequence is PRGFSCLLLLTSEIDLP. A sufficient to interact with MPP8 region spans residues 5-12; the sequence is GFSCLLLL. 2 required for secretion regions span residues 9-11 and 19-20; these read LLL and PV.

In terms of assembly, homodimer. Interacts with amyloid-beta protein 42 (Abeta42); the interaction prevents Abeta42 fibril formation. Interacts with BAX; forms fibers with BAX which results in BAX conformational changes and sequestering of BAX into the fibers, preventing BAX activation. Interacts with both full-length BID and cleaved BID p15; forms fibers with BID which results in BID conformational changes and sequestering of BID into the fibers, preventing BID activation. Interacts with BIM isoform BimEL but not with BIM isoforms BimL or BimS; the interaction prevents BIM-induced apoptosis. Interacts with IGFBP3; competes with importin KPNB1 for binding to IGFBP3, blocking IGFBP3 nuclear import. Interacts with TRIM11. Interacts with MPP8. As to expression, expressed in testis, seminal plasma and sperm (at protein level). Higher seminal plasma levels are associated with normospermia than with oligospermia, asthenospermia or oligoasthenospermia (at protein level). Higher sperm levels are associated with normospermia than with asthenospermia (at protein level). Expressed in retinal epithelial cells (at protein level). Expressed in the heart, skeletal muscle, kidney and liver. Lesser but significant expression is observed in the brain and the gastrointestinal tract. Expressed in the AD brain, where it is found in some of the large intact neurons of the occipital lobes and small and round reactive glial cells in the hippocampus.

Its subcellular location is the secreted. The protein resides in the cytoplasm. It is found in the cell projection. It localises to the cilium. The protein localises to the flagellum. Its subcellular location is the nucleus. The protein resides in the mitochondrion. Functionally, plays a role as a neuroprotective factor. Protects against neuronal cell death induced by multiple different familial Alzheimer disease genes and amyloid-beta proteins in Alzheimer disease. Mediates its neuroprotective effect by interacting with a receptor complex composed of IL6ST/GP130, IL27RA/WSX1 and CNTFR. Also acts as a ligand for G-protein coupled receptors FPR2/FPRL1 and FPR3/FPRL2. Inhibits amyloid-beta protein 40 fibril formation. Also inhibits amyloid-beta protein 42 fibril formation. Suppresses apoptosis by binding to BAX and preventing the translocation of BAX from the cytosol to mitochondria. Also suppresses apoptosis by binding to BID and inhibiting the interaction of BID with BAX and BAK which prevents oligomerization of BAX and BAK and suppresses release of apoptogenic proteins from mitochondria. Forms fibers with BAX and also with BID, inducing BAX and BID conformational changes and sequestering them into the fibers which prevents their activation. Can also suppress apoptosis by interacting with BIM isoform BimEL, inhibiting BimEL-induced activation of BAX, blocking oligomerization of BAX and BAK, and preventing release of apoptogenic proteins from mitochondria. Plays a role in up-regulation of anti-apoptotic protein BIRC6/APOLLON, leading to inhibition of neuronal cell death. Binds to IGFBP3 and specifically blocks IGFBP3-induced cell death. Competes with importin KPNB1 for binding to IGFBP3 which is likely to block IGFBP3 nuclear import. Induces chemotaxis of mononuclear phagocytes via FPR2/FPRL1. Reduces aggregation and fibrillary formation by suppressing the effect of APP on mononuclear phagocytes and acts by competitively inhibiting the access of FPR2 to APP. Protects retinal pigment epithelium (RPE) cells against oxidative stress-induced and endoplasmic reticulum (ER) stress-induced apoptosis. Promotes mitochondrial biogenesis in RPE cells following oxidative stress and promotes STAT3 phosphorylation which leads to inhibition of CASP3 release. Also reduces CASP4 levels in RPE cells, suppresses ER stress-induced mitochondrial superoxide production and plays a role in up-regulation of mitochondrial glutathione. Reduces testicular hormone deprivation-induced apoptosis of germ cells at the nonandrogen-sensitive stages of the seminiferous epithelium cycle. Protects endothelial cells against free fatty acid-induced inflammation by suppressing oxidative stress, reducing expression of TXNIP and inhibiting activation of the NLRP3 inflammasome which inhibits expression of pro-inflammatory cytokines IL1B and IL18. Protects against high glucose-induced endothelial cell dysfunction by mediating activation of ERK5 which leads to increased expression of transcription factor KLF2 and prevents monocyte adhesion to endothelial cells. Inhibits the inflammatory response in astrocytes. Increases the expression of PPARGC1A/PGC1A in pancreatic beta cells which promotes mitochondrial biogenesis. Increases insulin sensitivity. In Homo sapiens (Human), this protein is Humanin.